The sequence spans 354 residues: DNA polymerase IV (354 aa).

The 182-residue stretch at 6–187 folds into the UmuC domain; that stretch reads IIHVDCDCFY…LPVARLHGVG (182 aa). Aspartate 10 and aspartate 105 together coordinate Mg(2+). The active site involves glutamate 106.

It belongs to the DNA polymerase type-Y family. As to quaternary structure, monomer. Requires Mg(2+) as cofactor.

The protein resides in the cytoplasm. The catalysed reaction is DNA(n) + a 2'-deoxyribonucleoside 5'-triphosphate = DNA(n+1) + diphosphate. Its function is as follows. Poorly processive, error-prone DNA polymerase involved in untargeted mutagenesis. Copies undamaged DNA at stalled replication forks, which arise in vivo from mismatched or misaligned primer ends. These misaligned primers can be extended by PolIV. Exhibits no 3'-5' exonuclease (proofreading) activity. May be involved in translesional synthesis, in conjunction with the beta clamp from PolIII. The sequence is that of DNA polymerase IV from Pseudomonas putida (strain ATCC 47054 / DSM 6125 / CFBP 8728 / NCIMB 11950 / KT2440).